The following is a 450-amino-acid chain: Solute carrier family 52, riboflavin transporter, member 2 (450 aa).

A run of 5 helical transmembrane segments spans residues 14 to 34 (LLVA…WVEL), 47 to 67 (LPSY…LVTL), 79 to 99 (IPIQ…APLW), 114 to 136 (FLTL…LPFL), and 147 to 167 (FFLG…AQGV). A glycan (N-linked (GlcNAc...) asparagine) is linked at Asn178. Residues 201–221 (FFWVLTALLGTSAAAFQGLLL) traverse the membrane as a helical segment. The interval 230–268 (ATMGTGLRVETPGTEEEEEEEEASPLQEPPGQVASIVSS) is disordered. The span at 242–252 (GTEEEEEEEEA) shows a compositional bias: acidic residues. 5 helical membrane passes run 282–302 (ACLL…LPAV), 317–337 (LAVV…MAVL), 344–364 (LYGL…LAVL), 371–391 (VGTS…AGVF), and 409–429 (ALLA…IAMF).

It belongs to the riboflavin transporter family. Highly expressed in the placenta and small intestine, moderately in the kidney, colon, lung, prostate, uterus, and thymus, and weakly in all other tissues.

Its subcellular location is the cell membrane. It carries out the reaction riboflavin(in) = riboflavin(out). Riboflavin transport is Na(+)-independent but moderately pH-sensitive. Activity is strongly inhibited by riboflavin analogs, such as lumiflavin. Weakly inhibited by flavin adenine dinucleotide (FAD) and flavin mononucleotide (FMN). In terms of biological role, plasma membrane transporter mediating the uptake by cells of the water soluble vitamin B2/riboflavin that plays a key role in biochemical oxidation-reduction reactions of the carbohydrate, lipid, and amino acid metabolism. May also act as a receptor for 4-hydroxybutyrate. In Rattus norvegicus (Rat), this protein is Solute carrier family 52, riboflavin transporter, member 2 (Slc52a2).